The chain runs to 122 residues: Large ribosomal subunit protein uL14 (122 aa).

This sequence belongs to the universal ribosomal protein uL14 family. Part of the 50S ribosomal subunit. Forms a cluster with proteins L3 and L19. In the 70S ribosome, L14 and L19 interact and together make contacts with the 16S rRNA in bridges B5 and B8.

In terms of biological role, binds to 23S rRNA. Forms part of two intersubunit bridges in the 70S ribosome. The chain is Large ribosomal subunit protein uL14 from Orientia tsutsugamushi (strain Boryong) (Rickettsia tsutsugamushi).